Here is a 195-residue protein sequence, read N- to C-terminus: Imidazoleglycerol-phosphate dehydratase (195 aa).

Belongs to the imidazoleglycerol-phosphate dehydratase family.

The protein localises to the cytoplasm. The catalysed reaction is D-erythro-1-(imidazol-4-yl)glycerol 3-phosphate = 3-(imidazol-4-yl)-2-oxopropyl phosphate + H2O. It functions in the pathway amino-acid biosynthesis; L-histidine biosynthesis; L-histidine from 5-phospho-alpha-D-ribose 1-diphosphate: step 6/9. This is Imidazoleglycerol-phosphate dehydratase from Alkaliphilus metalliredigens (strain QYMF).